A 296-amino-acid chain; its full sequence is Probable cell wall protein PGA41 (296 aa).

The first 18 residues, 1–18, serve as a signal peptide directing secretion; sequence MKFTIVLFTLISVTVAAA. Positions 146–212 are enriched in low complexity; sequence IASSTKESSS…ITTISSDSST (67 aa). Residues 146 to 276 are disordered; it reads IASSTKESSS…PNSSQTAPGA (131 aa). Residues 220–245 are compositionally biased toward gly residues; sequence QGGGGNSGNNGSNGDGGNDASGGGGV. Asparagine 229 and asparagine 268 each carry an N-linked (GlcNAc...) asparagine glycan. Positions 247–274 are enriched in low complexity; the sequence is NENEQASSPPSSQSSTNSNQPNSSQTAP. A lipid anchor (GPI-anchor amidated glycine) is attached at glycine 275. A propeptide spans 276 to 296 (removed in mature form); sequence AANYLSSVSVGTLMILVLGLI.

This sequence belongs to the IHD1 family. Post-translationally, the GPI-anchor is attached to the protein in the endoplasmic reticulum and serves to target the protein to the cell surface. There, the glucosamine-inositol phospholipid moiety is cleaved off and the GPI-modified mannoprotein is covalently attached via its lipidless GPI glycan remnant to the 1,6-beta-glucan of the outer cell wall layer.

It is found in the secreted. It localises to the cell wall. The protein resides in the membrane. In terms of biological role, probable GPI-anchored cell wall protein that may be involved in cell wall organization, hyphal growth, as well as in virulence. The protein is Probable cell wall protein PGA41 (PGA41) of Candida albicans (strain SC5314 / ATCC MYA-2876) (Yeast).